We begin with the raw amino-acid sequence, 99 residues long: DNA-binding protein HU (99 aa).

The disordered stretch occupies residues 63–82 (HRKEREGRNPKTGAKMKIDA).

Belongs to the bacterial histone-like protein family. As to quaternary structure, homodimer.

Functionally, histone-like DNA-binding protein which is capable of wrapping DNA to stabilize it, and thus to prevent its denaturation under extreme environmental conditions. This is DNA-binding protein HU (hup) from Rickettsia prowazekii (strain Madrid E).